The following is a 198-amino-acid chain: Dephospho-CoA kinase (198 aa).

The DPCK domain occupies 2–90 (LIAIVGKPGV…KLSLVTKPLL (89 aa)). 10–15 (GVGKTS) contacts ATP.

This sequence belongs to the CoaE family.

It localises to the cytoplasm. The enzyme catalyses 3'-dephospho-CoA + ATP = ADP + CoA + H(+). The protein operates within cofactor biosynthesis; coenzyme A biosynthesis; CoA from (R)-pantothenate: step 5/5. In terms of biological role, catalyzes the phosphorylation of the 3'-hydroxyl group of dephosphocoenzyme A to form coenzyme A. This Mycoplasma genitalium (strain ATCC 33530 / DSM 19775 / NCTC 10195 / G37) (Mycoplasmoides genitalium) protein is Dephospho-CoA kinase.